A 1058-amino-acid chain; its full sequence is MEDGTPKHIIQMTGFKMEEKEALVKLLLKLDCTFIKSEKYKNCTHLIAERLCKSEKFLAACAAGKWILTKDYIIHSAKSGRWLDETTYEWGYKIEKDSRYSPQMQSAPKRWREELKRTGAPGAFHRWKVVLLVRTDKRSDSLIRVLEAGKANVILPKSSPSGITHVIASNARIKAEKEKDNFKAPFYPIQYLGDFLLEKEIQNDEDSQTNSVWTEHSNEETNKDFRKDAGFLEMKGALRETMYRTQKEMQNHEDVNVGSILIQHHKKEKFSGSSKDLKFVKMRNTFGSHTYENQKEIKKKDEDIQRSYTLRRKRKKGKESNCKKGVEHEKIKSTLRRHIYNRDQKEMKNSIFAEYAKESKAMAIKTDVDVVEIKNTLRKHIYRAQAVRYNCIRIDKQPVYNVEVKNAEFPRGVLNLIESLIEGHFFKEAIEELSTLQAHYIPPVCVLHALLENVLQDNIDTFSGRYFHILSALLHLHPPWKSPAMSRYYLELFQCPTCMKGAWSLVEVLIRSCLFNESFCHQISENIGSKVLHLTLLKFFFNLIESEVQHLSQKLYDWSDSQNLKITGKAMLLEIFWSGSETSGLLTKPVNMLLEWTIYSHKEKFKSNDVFKHELAYLLAGILGAAIDYWIFLGLKMGRNVMRHMSDDLGSYVSLSCDDFSSQELEIFICSFSSSWLQMFVAEAVFKKLCLQSSGSVSSEPLSLQKMVYSYLPALGKTGVLGSGKIQVSKKIGQRPCFDSQRTLLMLNGTKQKQVEGLPELLDLNLAKCSSSLKKLKKKSEGELSCSKENCPSVVKKMNFHKTNLKGETALHRACINNQVEKLILLLSLPGIDINVKDNAGWTPLHEACNYGNTVCVQEILQRCPEVDLLTQVDGVTPLHDALSNGHVEIGKLLLQHGGPVLLQQRNAKGELPLDYVVSPQIKEELFAITKIEDTVENFHAQAEKHFHYQQLEFGSFLLSRMLLNFCSIFDLSSEFILASKGLTHLNELLMACKSHKETTSVHTDWLLDLYAGNIKTLQKLPHILKELPENLKVCPGVHTEALMITLEMMCRSVMEFS.

2 consecutive BRCT domains span residues 12 to 77 and 119 to 196; these read MTGF…IHSA and GAPG…GDFL. An NSE5-like domain; mediates interaction with SLF2 region spans residues 410 to 1058; it reads PRGVLNLIES…MMCRSVMEFS (649 aa). ANK repeat units lie at residues 806–836, 840–869, and 874–903; these read KGET…DINV, AGWT…EVDL, and DGVT…PVLL. A Glycyl lysine isopeptide (Lys-Gly) (interchain with G-Cter in SUMO2) cross-link involves residue K931.

In terms of assembly, interacts (via N-terminus) with SLF2; this interaction links RAD18 to the SMC5-SMC6 complex. Interacts (via BRCT domains) with RAD18; this interaction occurs in a SLF2-independent manner. Interacts with SMC6. Interacts (via BRCT domains) with RAD18 (via C-terminus and phosphorylated form); this interaction is required for efficient repair of UV-induced DNA damage.

It is found in the nucleus. Its subcellular location is the cytoplasm. The protein localises to the cytoskeleton. It localises to the microtubule organizing center. The protein resides in the centrosome. Its function is as follows. Plays a role in the DNA damage response (DDR) pathway by regulating postreplication repair of UV-damaged DNA and genomic stability maintenance. The SLF1-SLF2 complex acts to link RAD18 with the SMC5-SMC6 complex at replication-coupled interstrand cross-links (ICL) and DNA double-strand breaks (DSBs) sites on chromatin during DNA repair in response to stalled replication forks. Promotes the recruitment of SLF2 and the SMC5-SMC6 complex to DNA lesions. In Homo sapiens (Human), this protein is SMC5-SMC6 complex localization factor protein 1.